The chain runs to 371 residues: Ferrochelatase (371 aa).

Residues H218 and E299 each coordinate Fe cation.

The protein belongs to the ferrochelatase family.

It is found in the cytoplasm. The catalysed reaction is heme b + 2 H(+) = protoporphyrin IX + Fe(2+). It participates in porphyrin-containing compound metabolism; protoheme biosynthesis; protoheme from protoporphyrin-IX: step 1/1. Functionally, catalyzes the ferrous insertion into protoporphyrin IX. This chain is Ferrochelatase, found in Cupriavidus necator (strain ATCC 17699 / DSM 428 / KCTC 22496 / NCIMB 10442 / H16 / Stanier 337) (Ralstonia eutropha).